Here is a 203-residue protein sequence, read N- to C-terminus: MSEQRQNPEQEVELNEDLAKMEADVEAAVQAAEEHAEQEQSPEAEIAMLYAELEVAKQTIADQKDGVVRAAADVENMRRRAAQDVEKAHKFALEKFANELLPVIDNLERAIEFSDKENETLKPVLEGISMTVKSFNDAVAKFGVEIVNPQGEQFNPEFHQAMSIQPSNDVSPNTVLAVMQKGYTLNGRLLRPAMVMVSKAADA.

It belongs to the GrpE family. Homodimer.

It localises to the cytoplasm. In terms of biological role, participates actively in the response to hyperosmotic and heat shock by preventing the aggregation of stress-denatured proteins, in association with DnaK and GrpE. It is the nucleotide exchange factor for DnaK and may function as a thermosensor. Unfolded proteins bind initially to DnaJ; upon interaction with the DnaJ-bound protein, DnaK hydrolyzes its bound ATP, resulting in the formation of a stable complex. GrpE releases ADP from DnaK; ATP binding to DnaK triggers the release of the substrate protein, thus completing the reaction cycle. Several rounds of ATP-dependent interactions between DnaJ, DnaK and GrpE are required for fully efficient folding. This chain is Protein GrpE, found in Pseudoalteromonas translucida (strain TAC 125).